The chain runs to 464 residues: MSIMRNFLSMIIMLCVCLNWCFAEGAEKSDSGKVLDSYTIQVSSLFPSSSSCVPSSKASNTKSSLRVVHMHGACSHLSSDARVDHDEIIRRDQARVESIYSKLSKNSANEVSEAKSTELPAKSGITLGSGNYIVTIGIGTPKHDLSLVFDTGSDLTWTQCEPCLGSCYSQKEPKFNPSSSSTYQNVSCSSPMCEDAESCSASNCVYSIVYGDKSFTQGFLAKEKFTLTNSDVLEDVYFGCGENNQGLFDGVAGLLGLGPGKLSLPAQTTTTYNNIFSYCLPSFTSNSTGHLTFGSAGISESVKFTPISSFPSAFNYGIDIIGISVGDKELAITPNSFSTEGAIIDSGTVFTRLPTKVYAELRSVFKEKMSSYKSTSGYGLFDTCYDFTGLDTVTYPTIAFSFAGSTVVELDGSGISLPIKISQVCLAFAGNDDLPAIFGNVQQTTLDVVYDVAGGRVGFAPNGC.

An N-terminal signal peptide occupies residues 1 to 25 (MSIMRNFLSMIIMLCVCLNWCFAEG). A Peptidase A1 domain is found at 132–460 (YIVTIGIGTP…DVAGGRVGFA (329 aa)). Residues D150 and D345 contribute to the active site. C384 and C425 are joined by a disulfide.

This sequence belongs to the peptidase A1 family.

It is found in the secreted. It localises to the extracellular space. The protein localises to the apoplast. Its function is as follows. Aspartyl protease involved in a homeostatic feedback mechanism regulating systemic immunity. Has only mild or no influence on local defenses. Acts downstream of salicylic acid to suppress systemic immunity. In Arabidopsis thaliana (Mouse-ear cress), this protein is Aspartyl protease AED1.